Here is a 428-residue protein sequence, read N- to C-terminus: tRNA(Ile)-lysidine synthase (428 aa).

28–33 (SGGVDS) contributes to the ATP binding site.

This sequence belongs to the tRNA(Ile)-lysidine synthase family.

It is found in the cytoplasm. The catalysed reaction is cytidine(34) in tRNA(Ile2) + L-lysine + ATP = lysidine(34) in tRNA(Ile2) + AMP + diphosphate + H(+). In terms of biological role, ligates lysine onto the cytidine present at position 34 of the AUA codon-specific tRNA(Ile) that contains the anticodon CAU, in an ATP-dependent manner. Cytidine is converted to lysidine, thus changing the amino acid specificity of the tRNA from methionine to isoleucine. The sequence is that of tRNA(Ile)-lysidine synthase from Streptococcus pyogenes serotype M18 (strain MGAS8232).